A 583-amino-acid polypeptide reads, in one-letter code: Long-chain-fatty-acid--AMP ligase FadD26 (583 aa).

The protein belongs to the ATP-dependent AMP-binding enzyme family.

It carries out the reaction holo-[(phenol)carboxyphthiodiolenone synthase] + a long-chain fatty acid + ATP = a long-chain fatty acyl-[(phenol)carboxyphthiodiolenone synthase] + AMP + diphosphate. The enzyme catalyses eicosanoate + holo-[(phenol)carboxyphthiodiolenone synthase] + ATP = icosanoyl-[(phenol)carboxyphthiodiolenone synthase] + AMP + diphosphate. It catalyses the reaction holo-[(phenol)carboxyphthiodiolenone synthase] + docosanoate + ATP = docosanoyl-[(phenol)carboxyphthiodiolenone synthase] + AMP + diphosphate. It participates in lipid metabolism; fatty acid biosynthesis. Catalyzes the activation of long-chain fatty acids as acyl-adenylates (acyl-AMP), which are then transferred to the multifunctional polyketide synthase PpsA for further chain extension. Catalyzes the adenylation of the long-chain fatty acids eicosanoate (C20) or docosanoate (C22), and potentially the very-long-chain fatty acid lignocerate (C24). Involved in the biosynthesis of phthiocerol dimycocerosate (DIM A) and phthiodiolone dimycocerosate (DIM B). The polypeptide is Long-chain-fatty-acid--AMP ligase FadD26 (fadD26) (Mycobacterium bovis (strain ATCC BAA-935 / AF2122/97)).